The sequence spans 399 residues: Probable aspartate/prephenate aminotransferase (399 aa).

Positions 39, 125, and 175 each coordinate L-aspartate. Lys-239 is subject to N6-(pyridoxal phosphate)lysine. Arg-375 provides a ligand contact to L-aspartate.

The protein belongs to the class-I pyridoxal-phosphate-dependent aminotransferase family. In terms of assembly, homodimer. Pyridoxal 5'-phosphate is required as a cofactor.

It localises to the cytoplasm. The catalysed reaction is L-aspartate + 2-oxoglutarate = oxaloacetate + L-glutamate. It catalyses the reaction L-arogenate + 2-oxoglutarate = prephenate + L-glutamate. Functionally, catalyzes the reversible conversion of aspartate and 2-oxoglutarate to glutamate and oxaloacetate. Can also transaminate prephenate in the presence of glutamate. This Rickettsia prowazekii (strain Madrid E) protein is Probable aspartate/prephenate aminotransferase (aatA).